The sequence spans 456 residues: RUN domain-containing protein 3B (456 aa).

The interval 1–26 (MASRSLGGLSGIRGGGGGGGKKSLSS) is disordered. Residues 8 to 21 (GLSGIRGGGGGGGK) show a composition bias toward gly residues. Omega-N-methylarginine is present on Arg13. An RUN domain is found at 57 to 189 (DDSSPEFNNF…IDFSFCLKGE (133 aa)). Phosphoserine occurs at positions 215 and 216. The stretch at 300–325 (AHKLEKEQLEYIIVELQDQLTVLKNN) forms a coiled coil. The tract at residues 382–405 (SLSQTSLDPGQSQEGDGKQDTLNI) is disordered.

The protein belongs to the RUNDC3 family. In terms of assembly, interacts with RAP2A.

The polypeptide is RUN domain-containing protein 3B (RUNDC3B) (Macaca fascicularis (Crab-eating macaque)).